Here is a 156-residue protein sequence, read N- to C-terminus: Small ribosomal subunit protein uS7 (156 aa).

Belongs to the universal ribosomal protein uS7 family. In terms of assembly, part of the 30S ribosomal subunit. Contacts proteins S9 and S11.

In terms of biological role, one of the primary rRNA binding proteins, it binds directly to 16S rRNA where it nucleates assembly of the head domain of the 30S subunit. Is located at the subunit interface close to the decoding center, probably blocks exit of the E-site tRNA. This is Small ribosomal subunit protein uS7 from Enterobacter sp. (strain 638).